The chain runs to 532 residues: Probable C4-dicarboxylate sensor kinase (532 aa).

The Cytoplasmic portion of the chain corresponds to 1–12 (MRLFRQLSIQWK). A helical transmembrane segment spans residues 13 to 33 (ITILSFGIVAFALMMVSISLL). At 34–175 (GYVTSIKEDE…YADMIQEFWQ (142 aa)) the chain is on the extracellular side. A helical membrane pass occupies residues 176 to 196 (PALLIGLITALFGFWGSWLLA). Residues 197–532 (SHIKRQTFNM…FSIYLPKKRG (336 aa)) are Cytoplasmic-facing. In terms of domain architecture, PAS spans 216-279 (VERDASFNAI…PEILSIGKPL (64 aa)). Positions 315 to 531 (SDVDRLAEEL…TFSIYLPKKR (217 aa)) constitute a Histidine kinase domain. The residue at position 339 (histidine 339) is a Phosphohistidine; by autocatalysis.

It is found in the cell membrane. It catalyses the reaction ATP + protein L-histidine = ADP + protein N-phospho-L-histidine.. Member of the two-component regulatory system DctS/DctR. Probably activates DctR by phosphorylation. Essential for expression of dctP. In Halalkalibacterium halodurans (strain ATCC BAA-125 / DSM 18197 / FERM 7344 / JCM 9153 / C-125) (Bacillus halodurans), this protein is Probable C4-dicarboxylate sensor kinase (dctS).